The sequence spans 186 residues: Small ribosomal subunit protein uS7 (186 aa).

Belongs to the universal ribosomal protein uS7 family. In terms of assembly, part of the 30S ribosomal subunit.

In terms of biological role, one of the primary rRNA binding proteins, it binds directly to 16S rRNA where it nucleates assembly of the head domain of the 30S subunit. Is located at the subunit interface close to the decoding center. The sequence is that of Small ribosomal subunit protein uS7 from Methanothermobacter thermautotrophicus (strain ATCC 29096 / DSM 1053 / JCM 10044 / NBRC 100330 / Delta H) (Methanobacterium thermoautotrophicum).